The sequence spans 456 residues: CBL-interacting protein kinase 16 (456 aa).

The region spanning 22–277 (YELGRLLGQG…IPEIMRTPWF (256 aa)) is the Protein kinase domain. ATP-binding positions include 28–36 (LGQGTFAKV) and K51. D145 functions as the Proton acceptor in the catalytic mechanism. The interval 163–192 (DFGLAALPEQLRQDGLLHTQCGTPAYVAPE) is activation loop. The NAF domain occupies 309–335 (AMSPRTCNAFQLISSMSSGFDLSGMFE). Positions 339 to 368 (KAATVFTSRAPAATVIQKLEAVGRSLGYSA) are PPI.

The protein belongs to the protein kinase superfamily. CAMK Ser/Thr protein kinase family. SNF1 subfamily. Mn(2+) serves as cofactor.

It carries out the reaction L-seryl-[protein] + ATP = O-phospho-L-seryl-[protein] + ADP + H(+). The enzyme catalyses L-threonyl-[protein] + ATP = O-phospho-L-threonyl-[protein] + ADP + H(+). Its function is as follows. CIPK serine-threonine protein kinases interact with CBL proteins. Binding of a CBL protein to the regulatory NAF domain of CIPK protein lead to the activation of the kinase in a calcium-dependent manner. The chain is CBL-interacting protein kinase 16 (CIPK16) from Oryza sativa subsp. japonica (Rice).